The primary structure comprises 187 residues: Flavin-dependent monooxygenase, reductase subunit HsaB (187 aa).

FAD-binding positions include 32–36 (PVGFA), 38–39 (QS), 53–55 (CPT), 59–60 (RS), and 85–86 (RF). 152-155 (FYRG) is an NAD(+) binding site.

Belongs to the non-flavoprotein flavin reductase family. HsaAB monooxygenase consists of an oxygenase component HsaA and a reductase component HsaB.

The enzyme catalyses a reduced flavin + NAD(+) = an oxidized flavin + NADH + 2 H(+). It participates in lipid metabolism; steroid biosynthesis. In terms of biological role, catalyzes the reduction of free flavins (FMN or FAD) by NADH. Subsequently, the reduced flavins diffuse to the HsaA oxygenase subunit. The protein is Flavin-dependent monooxygenase, reductase subunit HsaB (hsaB) of Mycobacterium tuberculosis (strain CDC 1551 / Oshkosh).